We begin with the raw amino-acid sequence, 214 residues long: Eukaryotic translation initiation factor 4E-1B (214 aa).

MRNA is bound by residues 53–54 (WQ), 99–100 (WE), 154–159 (RAKGDK), and 202–204 (TKS).

In terms of tissue distribution, ovary, muscle and testis.

It is found in the cytoplasm. It localises to the nucleus. Does not appear to be a mRNA-cap-binding protein. This chain is Eukaryotic translation initiation factor 4E-1B, found in Danio rerio (Zebrafish).